The chain runs to 534 residues: Ankyrin repeat and LEM domain-containing protein 1 (534 aa).

ANK repeat units follow at residues 4–35, 39–71, 75–104, and 108–137; these read TACLALRLLAALREEEARAVEELLRLGADPNL, DGAAAVHLAARASHPRALHCLRMLLRWGADPNA, EGLTPVHVAAAWGCCGALELLLSRGGDPTL, and DGLRPLDWALQQRHHNCARVLQELDTPTQP. The LEM domain maps to 279 to 323; that stretch reads HSSVPPMSDLQLLQALRALGYSPGPVTPFTRGHYLRRLQEAQASR. One can recognise a GIY-YIG domain in the interval 370 to 485; that stretch reads KSSFTYLLLD…ALGLQTLTNQ (116 aa). A Nuclear localization signal motif is present at residues 498 to 505; the sequence is PPSRRRRL.

Interacts (via LEM domain) with BANF1; the interaction may favor BANF1 dimerization. As to expression, predominantly expressed in bone marrow, spleen, thymus, colon and ovary. Expressed also to a lesser extent in lymph nodes, liver and testis.

The protein localises to the cytoplasm. It is found in the nucleus. Endonuclease that probably plays a role in the DNA damage response and DNA repair. This Mus musculus (Mouse) protein is Ankyrin repeat and LEM domain-containing protein 1.